The chain runs to 156 residues: Arginine repressor (156 aa).

It belongs to the ArgR family.

It is found in the cytoplasm. It participates in amino-acid biosynthesis; L-arginine biosynthesis [regulation]. Its function is as follows. Regulates arginine biosynthesis genes. The protein is Arginine repressor of Shewanella frigidimarina (strain NCIMB 400).